A 183-amino-acid polypeptide reads, in one-letter code: Extracellular superoxide dismutase [Cu-Zn] (183 aa).

The N-terminal stretch at 1–32 (MTMLQQILLISVIIGTVHVHEVDCANEVLKAR) is a signal peptide. The N-linked (GlcNAc...) asparagine glycan is linked to asparagine 63. Histidine 77, histidine 79, and histidine 94 together coordinate Cu cation. Cysteines 88 and 177 form a disulfide. Zn(2+) contacts are provided by histidine 94, histidine 102, histidine 111, and aspartate 114. Histidine 151 serves as a coordination point for Cu cation.

It belongs to the Cu-Zn superoxide dismutase family. It depends on Cu cation as a cofactor. Zn(2+) serves as cofactor.

It localises to the secreted. The protein resides in the extracellular space. It catalyses the reaction 2 superoxide + 2 H(+) = H2O2 + O2. Its function is as follows. Destroys radicals which are normally produced within the cells and which are toxic to biological systems. The protein is Extracellular superoxide dismutase [Cu-Zn] (SOD) of Haemonchus contortus (Barber pole worm).